We begin with the raw amino-acid sequence, 257 residues long: Neurotrophin-3 (257 aa).

Residues 1-18 form the signal peptide; the sequence is MSILFYVIFLAYLRGIQS. Residues 19–138 constitute a propeptide that is removed on maturation; that stretch reads TNMDQRSLPE…VLNRTSRRKR (120 aa). Asparagine 131 carries an N-linked (GlcNAc...) asparagine glycan. 3 disulfides stabilise this stretch: cysteine 152–cysteine 217, cysteine 195–cysteine 246, and cysteine 205–cysteine 248.

Belongs to the NGF-beta family. As to expression, in the embryo, the expression peak at E4.5 and decreases at later stages of development.

It localises to the secreted. Its function is as follows. Seems to promote the survival of visceral and proprioceptive sensory neurons. The chain is Neurotrophin-3 (NTF3) from Gallus gallus (Chicken).